Reading from the N-terminus, the 376-residue chain is Lipid-A-disaccharide synthase (376 aa).

Belongs to the LpxB family.

It catalyses the reaction a lipid X + a UDP-2-N,3-O-bis[(3R)-3-hydroxyacyl]-alpha-D-glucosamine = a lipid A disaccharide + UDP + H(+). The protein operates within bacterial outer membrane biogenesis; LPS lipid A biosynthesis. Condensation of UDP-2,3-diacylglucosamine and 2,3-diacylglucosamine-1-phosphate to form lipid A disaccharide, a precursor of lipid A, a phosphorylated glycolipid that anchors the lipopolysaccharide to the outer membrane of the cell. This chain is Lipid-A-disaccharide synthase, found in Pseudomonas fluorescens (strain Pf0-1).